A 331-amino-acid polypeptide reads, in one-letter code: MRLLVTGGAGFIGTNFVHSAVREHPDDAVTVLDALTYAGRRESLADVEDAIRLVQGDITDAELVSQLVAESDAVVHFAAESHVDNALDNPEPFLHTNVIGTFTILEAVRRHGVRLHHISTDEVYGDLELDDRARFTESTPYNPSSPYSATKAGADMLVRAWVRSYGVRATISNCSNNYGPYQHVEKFIPRQITNVLTGRRPKLYGAGANVRDWIHVDDHNSAVRRILDRGRIGRTYLISSEGERDNLTVLRTLLRLMDRDPDDFDHVTDRVGHDLRYAIDPSTLYDELCWAPKHTDFEEGLRTTIDWYRDNESWWRPLKDATEARYQERGQ.

NAD(+) contacts are provided by residues F11–I12, D33–T36, D57–I58, F77–S81, and T96. Residue S81 coordinates substrate. Substrate is bound at residue T120. The Proton donor role is filled by D121. Active-site proton acceptor residues include E122 and Y147. Residue Y147–K151 participates in NAD(+) binding. N176 provides a ligand contact to substrate. N177 contacts NAD(+). Residues K186–Q191, K202–Y204, R211, N246, and D269–H273 each bind substrate.

This sequence belongs to the NAD(P)-dependent epimerase/dehydratase family. dTDP-glucose dehydratase subfamily. As to quaternary structure, homodimer. NAD(+) serves as cofactor.

The catalysed reaction is dTDP-alpha-D-glucose = dTDP-4-dehydro-6-deoxy-alpha-D-glucose + H2O. The protein operates within carbohydrate biosynthesis; dTDP-L-rhamnose biosynthesis. Catalyzes the dehydration of dTDP-D-glucose to form dTDP-6-deoxy-D-xylo-4-hexulose via a three-step process involving oxidation, dehydration and reduction. Involved in the biosynthesis of the dTDP-L-rhamnose which is a component of the critical linker, D-N-acetylglucosamine-L-rhamnose disaccharide, which connects the galactan region of arabinogalactan to peptidoglycan via a phosphodiester linkage. This Mycobacterium tuberculosis (strain CDC 1551 / Oshkosh) protein is dTDP-glucose 4,6-dehydratase (rmlB).